The following is a 217-amino-acid chain: Adenylate kinase (217 aa).

10 to 15 (GIGKGT) contributes to the ATP binding site. The interval 30–59 (ATGDIFRKNFKENTELGILIKKIIAQGLLV) is NMP. Residues Thr-31, Arg-36, 57-59 (LLV), 85-88 (GFPR), and Gln-92 each bind AMP. Positions 126–163 (GRRICPECGKVYHIENIPPKTPGICDKDQKTLIQREDD) are LID. Position 127 (Arg-127) interacts with ATP. 2 residues coordinate Zn(2+): Cys-130 and Cys-133. Residue 136–137 (VY) participates in ATP binding. Cys-150 and Asp-153 together coordinate Zn(2+). Residues Arg-160 and Arg-171 each contribute to the AMP site. Gln-199 provides a ligand contact to ATP.

This sequence belongs to the adenylate kinase family. In terms of assembly, monomer.

It localises to the cytoplasm. The enzyme catalyses AMP + ATP = 2 ADP. It participates in purine metabolism; AMP biosynthesis via salvage pathway; AMP from ADP: step 1/1. In terms of biological role, catalyzes the reversible transfer of the terminal phosphate group between ATP and AMP. Plays an important role in cellular energy homeostasis and in adenine nucleotide metabolism. The sequence is that of Adenylate kinase from Onion yellows phytoplasma (strain OY-M).